A 412-amino-acid chain; its full sequence is CinA-like protein (412 aa).

This sequence belongs to the CinA family.

This Salinibacter ruber (strain DSM 13855 / M31) protein is CinA-like protein.